Consider the following 208-residue polypeptide: Guanylate kinase (208 aa).

In terms of domain architecture, Guanylate kinase-like spans 8–187 (GVCLVISAPS…AISQARSVLT (180 aa)). Position 15-22 (15-22 (APSGAGKS)) interacts with ATP.

This sequence belongs to the guanylate kinase family.

The protein resides in the cytoplasm. The catalysed reaction is GMP + ATP = GDP + ADP. Essential for recycling GMP and indirectly, cGMP. This Gluconobacter oxydans (strain 621H) (Gluconobacter suboxydans) protein is Guanylate kinase.